Here is a 74-residue protein sequence, read N- to C-terminus: Defensin (74 aa).

The signal sequence occupies residues 1-21 (MRGIYICLVFVLVCGLVSGLA). Positions 22-34 (DVPAESEMAHLRV) are excised as a propeptide. 3 disulfides stabilise this stretch: Cys-40-Cys-61, Cys-47-Cys-69, and Cys-51-Cys-71.

In terms of tissue distribution, expressed in the hemocytes, fat body and ovaries.

It localises to the secreted. Its function is as follows. Antibacterial peptide mostly active against Gram-positive bacteria. In Rhipicephalus microplus (Cattle tick), this protein is Defensin.